The following is a 127-amino-acid chain: Glycine cleavage system H protein (127 aa).

One can recognise a Lipoyl-binding domain in the interval 24–105 (TALVGITDFA…YEDGWMVKVS (82 aa)). N6-lipoyllysine is present on K65.

This sequence belongs to the GcvH family. In terms of assembly, the glycine cleavage system is composed of four proteins: P, T, L and H. (R)-lipoate is required as a cofactor.

In terms of biological role, the glycine cleavage system catalyzes the degradation of glycine. The H protein shuttles the methylamine group of glycine from the P protein to the T protein. The protein is Glycine cleavage system H protein of Prosthecochloris aestuarii (strain DSM 271 / SK 413).